The sequence spans 177 residues: Large ribosomal subunit protein uL6 (177 aa).

Belongs to the universal ribosomal protein uL6 family. In terms of assembly, part of the 50S ribosomal subunit.

Its function is as follows. This protein binds to the 23S rRNA, and is important in its secondary structure. It is located near the subunit interface in the base of the L7/L12 stalk, and near the tRNA binding site of the peptidyltransferase center. This chain is Large ribosomal subunit protein uL6, found in Parvibaculum lavamentivorans (strain DS-1 / DSM 13023 / NCIMB 13966).